The primary structure comprises 506 residues: Tabersonine 16-hydroxylase 1 (506 aa).

A helical transmembrane segment spans residues 1 to 21; that stretch reads MEFYYFLYLAFLLFCFILSKT. Cys-447 is a heme binding site.

Belongs to the cytochrome P450 family. Requires heme as cofactor. As to expression, predominantly expressed in young leaves of mature plants. Low expression in roots and flowers, but not detected in stems and old leaves. Found predominantly in leaf epidermis. Barely detected in roots, internodes, young and mature leaves, and flower buds, but relatively abundant in fully developed flowers. Not detected in leaf epidermal cells.

The protein resides in the endoplasmic reticulum membrane. The catalysed reaction is (-)-tabersonine + reduced [NADPH--hemoprotein reductase] + O2 = 16-hydroxytabersonine + oxidized [NADPH--hemoprotein reductase] + H2O + H(+). Its pathway is alkaloid biosynthesis; vindoline biosynthesis. Involved in the flower biosynthesis of vindoline, a precursor of vinblastine and vincristine. Hydroxylates specifically tabersonine, 2,3-dihydrotabersonine and 2,3-dihydro-3-hydroxytabersonine, but has no activity with naringenin, tryptamine, secologanin, strictosidine, ajmalicine, vindoline and catharanthine. In Catharanthus roseus (Madagascar periwinkle), this protein is Tabersonine 16-hydroxylase 1.